Here is a 4730-residue protein sequence, read N- to C-terminus: Dynein heavy chain, cytoplasmic (4730 aa).

Disordered regions lie at residues Met-1–Pro-23 and Thr-91–Ser-120. The interval Met-1 to Tyr-1935 is stem. Positions Ser-10–Pro-23 are enriched in low complexity. Residues Val-867–Ser-900 adopt a coiled-coil conformation. A disordered region spans residues Glu-964 to Ile-1016. Residues Ser-969–Lys-978 are compositionally biased toward polar residues. Low complexity predominate over residues Thr-1002–Ile-1016. Coiled-coil stretches lie at residues Glu-1204–Ser-1224, Ala-1343–Asp-1372, Arg-1425–Leu-1441, and Ala-1661–Arg-1689. AAA stretches follow at residues Tyr-1936–Ser-2158, Lys-2238–Leu-2531, Glu-2635–Ala-2885, and Val-2978–Gln-3252. Position 1974 to 1981 (Gly-1974 to Thr-1981) interacts with ATP. A coiled-coil region spans residues Ile-2231–Gln-2253. An ATP-binding site is contributed by Gly-2276–Thr-2283. The segment at Glu-2437–Ser-2486 is disordered. Residues Pro-2441–Glu-2451 are compositionally biased toward basic and acidic residues. Residues Gln-2442–Thr-2462 adopt a coiled-coil conformation. Positions Gln-2454–Ser-2486 are enriched in low complexity. Residues Gly-2674–Thr-2681 and Gly-3016–Ser-3023 contribute to the ATP site. Coiled coils occupy residues Ile-3271–Asp-3349, Ala-3483–Met-3585, and Thr-3854–Glu-3881. The interval Ile-3271 to Met-3585 is stalk. 2 AAA regions span residues Leu-3638–Leu-3867 and Ser-4098–Tyr-4312. Residues Lys-4432–Lys-4465 are disordered. Residues Ser-4449–Lys-4463 show a composition bias toward basic and acidic residues.

This sequence belongs to the dynein heavy chain family. As to quaternary structure, consists of at least two heavy chains and a number of intermediate and light chains.

Its subcellular location is the cytoplasm. The protein localises to the cytoskeleton. Functionally, cytoplasmic dynein acts as a motor for the intracellular retrograde motility of vesicles and organelles along microtubules. Dynein has ATPase activity; the force-producing power stroke is thought to occur on release of ADP. This is Dynein heavy chain, cytoplasmic (dhcA) from Dictyostelium discoideum (Social amoeba).